A 331-amino-acid chain; its full sequence is FMRFamide-related neuropeptides (331 aa).

Positions 1–25 (MRCWSPCSLLVVIVIYCLSSHTSEA) are cleaved as a signal peptide. The propeptide occupies 26–65 (FDLAQACVESQRLSLLPICDTIFAVQQEGVQQSADDGMRS). Residues Phe-71 and Phe-83 each carry the phenylalanine amide modification. A propeptide spanning residues 86 to 94 (NVPDLPFED) is cleaved from the precursor. At Phe-100 the chain carries Phenylalanine amide. The propeptide occupies 103-168 (AAPQLDELLK…YIDDVEDSDV (66 aa)). A disordered region spans residues 122–158 (QKADETSVRRKRSTDAAPQNNAENPEQKNDSAKITKR). A compositionally biased stretch (basic and acidic residues) spans 146 to 158 (PEQKNDSAKITKR). Phenylalanine amide is present on residues Phe-174 and Phe-181. A propeptide spanning residues 184-194 (NPSDVGNKLTE) is cleaved from the precursor. Phe-200 is modified (phenylalanine amide). Residues 203–205 (DPE) constitute a propeptide that is removed on maturation. Phe-211 carries the post-translational modification Phenylalanine amide. Positions 214-216 (SDD) are excised as a propeptide. Phe-222 bears the Phenylalanine amide mark. Positions 225–236 (NPSDAEDELEED) are excised as a propeptide. A Phenylalanine amide modification is found at Phe-242. A propeptide spanning residues 245–254 (GGEDDEEEAE) is cleaved from the precursor. A Phenylalanine amide modification is found at Phe-260. The propeptide occupies 263–265 (DPE). At Phe-271 the chain carries Phenylalanine amide. A propeptide spanning residues 274–277 (SGED) is cleaved from the precursor. Residues 279 to 296 (RFMRFGRNPDEQEADKRF) show a composition bias toward basic and acidic residues. A disordered region spans residues 279–310 (RFMRFGRNPDEQEADKRFMRFGRGGEDDEVST). Phe-283 carries the post-translational modification Phenylalanine amide. The propeptide occupies 286-293 (NPDEQEAD). Phe-299 carries the post-translational modification Phenylalanine amide. Residues 302-312 (GGEDDEVSTED) constitute a propeptide that is removed on maturation. Phe-318 carries the phenylalanine amide modification. A propeptide spanning residues 321–331 (SADKCKGCLEG) is cleaved from the precursor.

This sequence belongs to the FARP (FMRFamide related peptide) family.

The protein resides in the secreted. In terms of biological role, excitatory neurotransmitters that directly modulate chromatophore function by activating chromatophore expansion at the chromatophore neuromuscular junction. The chain is FMRFamide-related neuropeptides from Doryteuthis opalescens (California market squid).